The following is a 401-amino-acid chain: Riboflavin biosynthesis protein RibBA (401 aa).

The interval Met1–Lys203 is DHBP synthase. D-ribulose 5-phosphate is bound by residues Arg30–Glu31, Asp35, Arg142–Thr146, and Glu166. Glu31 provides a ligand contact to Mg(2+). Position 145 (His145) interacts with Mg(2+). Residues His204–Phe401 form a GTP cyclohydrolase II region. A GTP-binding site is contributed by Arg254 to Glu258. Zn(2+)-binding residues include Cys259, Cys270, and Cys272. GTP is bound by residues Gln275, Glu297 to Arg299, and Thr319. Catalysis depends on Asp331, which acts as the Proton acceptor; for GTP cyclohydrolase activity. The Nucleophile; for GTP cyclohydrolase activity role is filled by Arg333. Residues Thr354 and Lys359 each contribute to the GTP site.

The protein in the N-terminal section; belongs to the DHBP synthase family. It in the C-terminal section; belongs to the GTP cyclohydrolase II family. The cofactor is Mg(2+). It depends on Mn(2+) as a cofactor. Zn(2+) serves as cofactor.

It catalyses the reaction D-ribulose 5-phosphate = (2S)-2-hydroxy-3-oxobutyl phosphate + formate + H(+). The enzyme catalyses GTP + 4 H2O = 2,5-diamino-6-hydroxy-4-(5-phosphoribosylamino)-pyrimidine + formate + 2 phosphate + 3 H(+). It functions in the pathway cofactor biosynthesis; riboflavin biosynthesis; 2-hydroxy-3-oxobutyl phosphate from D-ribulose 5-phosphate: step 1/1. The protein operates within cofactor biosynthesis; riboflavin biosynthesis; 5-amino-6-(D-ribitylamino)uracil from GTP: step 1/4. Catalyzes the conversion of D-ribulose 5-phosphate to formate and 3,4-dihydroxy-2-butanone 4-phosphate. Functionally, catalyzes the conversion of GTP to 2,5-diamino-6-ribosylamino-4(3H)-pyrimidinone 5'-phosphate (DARP), formate and pyrophosphate. This is Riboflavin biosynthesis protein RibBA from Actinobacillus pleuropneumoniae serotype 3 (strain JL03).